A 135-amino-acid polypeptide reads, in one-letter code: Histone H3 type 1 (135 aa).

The interval 1–40 (MARTKQTARKSTGGKAPRKQLATKAARKTPATGGVKKPHR) is disordered. The residue at position 5 (Lys5) is an N6-methyllysine. The residue at position 10 (Lys10) is an N6-acetyllysine; alternate. Lys10 bears the N6-methyllysine; alternate mark. Residue Ser11 is modified to Phosphoserine. The residue at position 12 (Thr12) is a Phosphothreonine. N6-acetyllysine is present on residues Lys15, Lys19, and Lys24. Lys28 is modified (N6-acetyllysine; alternate). Position 28 is an N6-methyllysine; alternate (Lys28). 2 positions are modified to N6-methyllysine: Lys36 and Lys37.

This sequence belongs to the histone H3 family. As to quaternary structure, the nucleosome is a histone octamer containing two molecules each of H2A, H2B, H3 and H4 assembled in one H3-H4 heterotetramer and two H2A-H2B heterodimers. The octamer wraps approximately 147 bp of DNA. In terms of processing, acetylation is generally linked to gene activation. Acetylated to form H3K9ac (11%), H3K14ac (17%), H3K18ac (11%), H3K23ac (16%) and H3K27ac (7%). H3K4, H3K35 and H3K36 are not acetylated. H3K4me prevents acetylation. 32% of the histone H3 are acetylated with, on average, 2.4 acetyl-Lys. They are all continuously deacatylated and re-acetylated with a half-life of approximately 2 minutes. Post-translationally, monomethylated to form H3K4me1 (81%), H3K9me1 (16%), H3K27me1 (25%), H3K35me1 (25%) and H3K36me1 (5%). No methylation at H3K14, H3K18 and H3K23. Methylated by a protein complex that includes Mut11. Set1 methylates specifically H3K4. H3K4me1 is associated with silenced euchromatin. Set3 forms H3K9me1, while H3K9me2 is undetected. H3K9me1 is specifically associated with silent, multi-copy transgenes. No phosphorylation detected.

The protein localises to the nucleus. The protein resides in the chromosome. Its function is as follows. Core component of nucleosome. Nucleosomes wrap and compact DNA into chromatin, limiting DNA accessibility to the cellular machineries which require DNA as a template. Histones thereby play a central role in transcription regulation, DNA repair, DNA replication and chromosomal stability. DNA accessibility is regulated via a complex set of post-translational modifications of histones, also called histone code, and nucleosome remodeling. This Chlamydomonas reinhardtii (Chlamydomonas smithii) protein is Histone H3 type 1 (ch3-I).